Consider the following 334-residue polypeptide: Protein-glutamate methylesterase/protein-glutamine glutaminase 1 (334 aa).

The Response regulatory domain maps to 2 to 120 (NIGIVNDLPL…GAAGDTTKLL (119 aa)). At Asp-53 the chain carries 4-aspartylphosphate. The region spanning 145 to 334 (RAGGGPLIAI…AGELAALARI (190 aa)) is the CheB-type methylesterase domain. Residues Ser-157, His-184, and Asp-277 contribute to the active site.

Belongs to the CheB family. Phosphorylated by CheA. Phosphorylation of the N-terminal regulatory domain activates the methylesterase activity.

Its subcellular location is the cytoplasm. It carries out the reaction [protein]-L-glutamate 5-O-methyl ester + H2O = L-glutamyl-[protein] + methanol + H(+). It catalyses the reaction L-glutaminyl-[protein] + H2O = L-glutamyl-[protein] + NH4(+). Involved in chemotaxis. Part of a chemotaxis signal transduction system that modulates chemotaxis in response to various stimuli. Catalyzes the demethylation of specific methylglutamate residues introduced into the chemoreceptors (methyl-accepting chemotaxis proteins or MCP) by CheR. Also mediates the irreversible deamidation of specific glutamine residues to glutamic acid. The sequence is that of Protein-glutamate methylesterase/protein-glutamine glutaminase 1 from Burkholderia lata (strain ATCC 17760 / DSM 23089 / LMG 22485 / NCIMB 9086 / R18194 / 383).